Consider the following 176-residue polypeptide: RNA pyrophosphohydrolase (176 aa).

One can recognise a Nudix hydrolase domain in the interval 6-149; it reads GYRPNVGIVI…KRDVYRRVMK (144 aa). A Nudix box motif is present at residues 38-59; it reads GGINPGESAEQAMYRELFEEVG.

This sequence belongs to the Nudix hydrolase family. RppH subfamily. A divalent metal cation serves as cofactor.

Accelerates the degradation of transcripts by removing pyrophosphate from the 5'-end of triphosphorylated RNA, leading to a more labile monophosphorylated state that can stimulate subsequent ribonuclease cleavage. The chain is RNA pyrophosphohydrolase from Klebsiella pneumoniae (strain 342).